A 349-amino-acid polypeptide reads, in one-letter code: Nitrilase, bromoxynil-specific (349 aa).

Positions 5-274 (FKAAAVQAEP…EGIVYAEIDL (270 aa)) constitute a CN hydrolase domain. Residue glutamate 45 is the Proton acceptor of the active site. Lysine 127 (proton donor) is an active-site residue. The active-site Nucleophile is the cysteine 161.

It belongs to the carbon-nitrogen hydrolase superfamily. Nitrilase family. As to quaternary structure, homodimer.

It carries out the reaction a nitrile + 2 H2O = a carboxylate + NH4(+). In terms of biological role, specific for the herbicide bromoxynil (3,5-dibromo-4-hydroxybenzonitrile); converts it to its metabolite 3,5-dibromo-4-hydroxybenzoic acid. In Klebsiella pneumoniae subsp. ozaenae, this protein is Nitrilase, bromoxynil-specific (bxn).